The sequence spans 22 residues: Caerin-3.2 (22 aa).

K22 carries the post-translational modification Lysine amide.

As to expression, expressed by the skin parotoid and/or rostral glands.

The protein resides in the secreted. Its function is as follows. Antibacterial peptide, that adopts an alpha helical conformation which can disrupt bacterial membranes. Each caerin displays a different antimicrobial specificity. The protein is Caerin-3.2 of Ranoidea caerulea (Green tree frog).